Here is a 322-residue protein sequence, read N- to C-terminus: Transmembrane protein 171 (322 aa).

Helical transmembrane passes span 22-42 (IFFL…LSIF), 57-77 (IVLK…VILA), 112-132 (LIFG…GIWV), and 159-179 (FLSL…FFVV). The tract at residues 223-322 (PPPYFPESSA…LGAPSDASPP (100 aa)) is disordered. Low complexity predominate over residues 228–241 (PESSAAAPSPGANS). Composition is skewed to polar residues over residues 242 to 267 (LHQI…NQGA) and 279 to 289 (ISGQGSSSERS).

It localises to the membrane. The polypeptide is Transmembrane protein 171 (Tmem171) (Mus musculus (Mouse)).